Here is a 90-residue protein sequence, read N- to C-terminus: MPNIKSAIKRVEIAKVRTIKNAAAKSTLRTTIRRFEESLSTDAETAKLALNKATRALDKASSKGLVHKNTAARKKSRLTKRYAKQFAQVG.

The protein belongs to the bacterial ribosomal protein bS20 family.

In terms of biological role, binds directly to 16S ribosomal RNA. The protein is Small ribosomal subunit protein bS20 of Desulfitobacterium hafniense (strain DSM 10664 / DCB-2).